We begin with the raw amino-acid sequence, 418 residues long: Gamma-glutamyl phosphate reductase (418 aa).

Belongs to the gamma-glutamyl phosphate reductase family.

The protein localises to the cytoplasm. The catalysed reaction is L-glutamate 5-semialdehyde + phosphate + NADP(+) = L-glutamyl 5-phosphate + NADPH + H(+). The protein operates within amino-acid biosynthesis; L-proline biosynthesis; L-glutamate 5-semialdehyde from L-glutamate: step 2/2. Its function is as follows. Catalyzes the NADPH-dependent reduction of L-glutamate 5-phosphate into L-glutamate 5-semialdehyde and phosphate. The product spontaneously undergoes cyclization to form 1-pyrroline-5-carboxylate. In Syntrophotalea carbinolica (strain DSM 2380 / NBRC 103641 / GraBd1) (Pelobacter carbinolicus), this protein is Gamma-glutamyl phosphate reductase.